A 635-amino-acid polypeptide reads, in one-letter code: Sodium- and chloride-dependent creatine transporter 1 (635 aa).

Over residues 1–11 (MANKSTENGIY) the composition is skewed to polar residues. The segment at 1–27 (MANKSTENGIYSVSGEEKKGPLIAPGP) is disordered. The Cytoplasmic segment spans residues 1-60 (MANKSTENGIYSVSGEEKKGPLIAPGPDGAPAKGDGPAALGAPGSLLAVPPRETWTRQMD). Residues 61 to 81 (FIMSCVGFAVGLGNVWRFPYL) form a helical membrane-spanning segment. Residues 82–87 (CYKNGG) are Extracellular-facing. The helical transmembrane segment at 88-108 (GVFLIPYILIALIGGIPIFFL) threads the bilayer. Topologically, residues 109–138 (EISLGQFMKAGSINVWNICPLFKGLGYASM) are cytoplasmic. The helical transmembrane segment at 139–159 (VIVFYCNTYYIMVLAWGFYYL) threads the bilayer. Topologically, residues 160 to 230 (VKSFTTTLPW…LSEGLEVPGA (71 aa)) are extracellular. N-linked (GlcNAc...) asparagine glycans are attached at residues N192 and N197. The helical transmembrane segment at 231–251 (LNWEVTLCLLTCWVLVYFCVW) threads the bilayer. Residues 252–269 (KGVKSTGKIVYFTATFPY) are Cytoplasmic-facing. The chain crosses the membrane as a helical span at residues 270 to 290 (VVLVVLLVRGVLLPGALDGII). The Extracellular portion of the chain corresponds to 291 to 304 (YYLKPDWSKLASPQ). Residues 305 to 325 (VWIDAGTQIFFSYAIGLGALT) form a helical membrane-spanning segment. Topologically, residues 326 to 341 (ALGSYNRFNNNCYKDA) are cytoplasmic. The helical transmembrane segment at 342 to 362 (IILALINSGTSFFAGFVVFSI) threads the bilayer. Residues 363 to 394 (LGFMATEQGVHISKVAESGPGLAFIAYPRAVT) lie on the Extracellular side of the membrane. Residues 395–415 (LMPVAPLWAALFFFMLLLLGL) form a helical membrane-spanning segment. Residues 416 to 444 (DSQFVGVEGFITGLLDLLPASYYFRFQRE) are Cytoplasmic-facing. A helical transmembrane segment spans residues 445-465 (ISVALCCTICFVIDLSMVTDG). Topologically, residues 466 to 479 (GMYVFQLFDYYSAS) are extracellular. The chain crosses the membrane as a helical span at residues 480–500 (GTTLLWQAFWECVVVAWVYGA). Over 501–520 (DRFMDDVACMIGYRPCPWMK) the chain is Cytoplasmic. The helical transmembrane segment at 521 to 541 (WCWSFFTPLVCMGIFIFNVVY) threads the bilayer. At 542–560 (HEPLVYNNTYVYPWWGEAV) the chain is on the extracellular side. N-linked (GlcNAc...) asparagine glycosylation is present at N548. Residues 561–581 (GWAFALSSMLCVPLHLLGCLL) form a helical membrane-spanning segment. Topologically, residues 582 to 635 (RAKGTMAERWQHLTQPIWGLHHLEYRAQDSDVRGLTTLTPVSESSKVVVVESVM) are cytoplasmic. 2 positions are modified to phosphothreonine: T617 and T620. S623 is modified (phosphoserine).

It belongs to the sodium:neurotransmitter symporter (SNF) (TC 2.A.22) family. SLC6A8 subfamily. In terms of processing, glycosylated.

Its subcellular location is the cell membrane. The protein localises to the apical cell membrane. It carries out the reaction creatine(out) + chloride(out) + 2 Na(+)(out) = creatine(in) + chloride(in) + 2 Na(+)(in). In terms of biological role, creatine:sodium symporter which mediates the uptake of creatine. Plays an important role in supplying creatine to the brain via the blood-brain barrier. The protein is Sodium- and chloride-dependent creatine transporter 1 (SLC6A8) of Bos taurus (Bovine).